The sequence spans 338 residues: Deoxyhypusine hydroxylase (338 aa).

HEAT-like PBS-type repeat units follow at residues 71–97 (LKHELAYCLGQTRNPDAVAFLQQVLKD), 104–130 (CRHEAAEALGALGYEDSLEILKALKDD), 200–233 (QRYRAMFALRDLASPPDLPTAVQAVDALAKGLKD), 238–264 (FRHEVAFVFGQLCHPASVPSLTECLSN), and 271–298 (VRHEAAEALGSLGDVEGVEDTLKKFLND). The Fe cation site is built by His-73, Glu-74, His-106, and Glu-107. His-240, Glu-241, His-273, and Glu-274 together coordinate Fe cation.

This sequence belongs to the deoxyhypusine hydroxylase family. Fe(2+) serves as cofactor.

Its subcellular location is the cytoplasm. The protein resides in the nucleus. The catalysed reaction is [eIF5A protein]-deoxyhypusine + AH2 + O2 = [eIF5A protein]-hypusine + A + H2O. The protein operates within protein modification; eIF5A hypusination. In terms of biological role, catalyzes the hydroxylation of the N(6)-(4-aminobutyl)-L-lysine intermediate to form hypusine, an essential post-translational modification only found in mature eIF-5A factor. This chain is Deoxyhypusine hydroxylase (lia1), found in Aspergillus niger (strain ATCC MYA-4892 / CBS 513.88 / FGSC A1513).